We begin with the raw amino-acid sequence, 215 residues long: Dual specificity phosphatase 29 (215 aa).

One can recognise a Tyrosine-protein phosphatase domain in the interval 53 to 201 (HVNEVWPRLH…LRELDKQLVK (149 aa)). Substrate is bound at residue 145–152 (HCAMGRSR). The Phosphocysteine intermediate role is filled by C146.

Belongs to the protein-tyrosine phosphatase family. Non-receptor class dual specificity subfamily. As to quaternary structure, homodimer. Interacts with PRKAA2. Skeletal muscle, liver and adipose tissue.

Its subcellular location is the cytoplasm. It localises to the nucleus. It catalyses the reaction O-phospho-L-tyrosyl-[protein] + H2O = L-tyrosyl-[protein] + phosphate. The enzyme catalyses O-phospho-L-seryl-[protein] + H2O = L-seryl-[protein] + phosphate. It carries out the reaction O-phospho-L-threonyl-[protein] + H2O = L-threonyl-[protein] + phosphate. Functionally, dual specificity phosphatase able to dephosphorylate phosphotyrosine, phosphoserine and phosphothreonine residues within the same substrate, with a preference for phosphotyrosine as a substrate. Involved in the modulation of intracellular signaling cascades. In skeletal muscle regulates systemic glucose homeostasis by activating, AMPK, an energy sensor protein kinase. Affects MAP kinase signaling though modulation of the MAPK1/2 cascade in skeletal muscle promoting muscle cell differentiation, development and atrophy. The sequence is that of Dual specificity phosphatase 29 from Mus musculus (Mouse).